A 633-amino-acid polypeptide reads, in one-letter code: MKLQNSFRDYTAESALFVRRALVAFLGILLLTGVLIANLYNLQIVRFTDYQTRSNENRIKLVPIAPSRGIIYDRNGIPLALNRTIYQIEMMPEKVDNVQQTLDALRSVVDLTDDDIAAFRKERARSHRFTSIPVKTNLTEVQVARFAVNQYRFPGVEVKGYKRRYYPYGSALTHVIGYVSKINDKDVERLNNDGKLANYAATHDIGKLGIERYYEDVLHGQTGYEEVEVNNRGRVIRQLKEVPPQAGHDIYLTLDLKLQQYIETLLAGSRAAVVVTDPRTGGVLALVSTPSYDPNLFVDGISSKDYSALLNDPNTPLVNRATQGVYPPASTVKPYVAVSALSAGVITRNTTLFDPGWWQLPGSEKRYRDWKKWGHGRLNVTRSLEESADTFFYQVAYDMGIDRLSEWMGKFGYGHYTGIDLAEERSGNMPTREWKQKRFKKPWYQGDTIPVGIGQGYWTATPIQMSKALMILINDGIVKVPHLLMSTAEDGKQVPWVQPHEPPVGDIHSGYWELAKDGMYGVANRPNGTAHKYFASAPYKIAAKSGTAQVFGLKANETYNAHKIAERLRDHKLMTAFAPYNNPQVAVAMILENGGAGPAVGTLMRQILDHIMLGDNNTDLPAENPAVAAAEDH.

The chain crosses the membrane as a helical span at residues 22–42 (LVAFLGILLLTGVLIANLYNL). Residue Ser330 is the Acyl-ester intermediate of the active site.

It belongs to the transpeptidase family. MrdA subfamily.

The protein resides in the cell inner membrane. The catalysed reaction is Preferential cleavage: (Ac)2-L-Lys-D-Ala-|-D-Ala. Also transpeptidation of peptidyl-alanyl moieties that are N-acyl substituents of D-alanine.. It functions in the pathway cell wall biogenesis; peptidoglycan biosynthesis. Catalyzes cross-linking of the peptidoglycan cell wall. This Escherichia coli O157:H7 protein is Peptidoglycan D,D-transpeptidase MrdA.